Reading from the N-terminus, the 3065-residue chain is MAX gene-associated protein (3065 aa).

Glycyl lysine isopeptide (Lys-Gly) (interchain with G-Cter in SUMO2) cross-links involve residues lysine 4 and lysine 178. The segment at residues 84–260 (MWNEFYHRST…YNPFAKGFRD (177 aa)) is a DNA-binding region (T-box). Residues 259-277 (RDDGLNNKPQRDGKQKNSS) show a composition bias toward basic and acidic residues. The tract at residues 259–322 (RDDGLNNKPQ…GHETSGKGLE (64 aa)) is disordered. Residues 278 to 289 (DQEGNNISSSSG) are compositionally biased toward polar residues. The span at 309–322 (PLSRGHETSGKGLE) shows a compositional bias: basic and acidic residues. Glycyl lysine isopeptide (Lys-Gly) (interchain with G-Cter in SUMO2) cross-links involve residues lysine 323, lysine 329, lysine 349, lysine 432, lysine 460, lysine 465, and lysine 482. Serine 534 bears the Phosphoserine mark. A Glycyl lysine isopeptide (Lys-Gly) (interchain with G-Cter in SUMO2) cross-link involves residue lysine 570. Positions 604 to 653 (QNASPNVPGKRGRPRKLKLCKAGRPPKNTGKSLISTKNTPVSPGSTFPDV) are disordered. At serine 607 the chain carries Phosphoserine. Residue lysine 613 forms a Glycyl lysine isopeptide (Lys-Gly) (interchain with G-Cter in SUMO2) linkage. The span at 613-624 (KRGRPRKLKLCK) shows a compositional bias: basic residues. The segment covering 632–648 (TGKSLISTKNTPVSPGS) has biased composition (polar residues). Serine 645 carries the post-translational modification Phosphoserine. Residues lysine 654, lysine 785, lysine 791, lysine 817, and lysine 826 each participate in a glycyl lysine isopeptide (Lys-Gly) (interchain with G-Cter in SUMO2) cross-link. A Phosphoserine modification is found at serine 851. The interval 881 to 911 (STSYSLKPHSVPPVSRKAKSQNRQATFSGRT) is disordered. A compositionally biased stretch (polar residues) spans 901–911 (QNRQATFSGRT). Serine 924 bears the Phosphoserine mark. A Glycyl lysine isopeptide (Lys-Gly) (interchain with G-Cter in SUMO2) cross-link involves residue lysine 928. Positions 971–990 (RQAQQQQQQQQGSRPPGLSK) are disordered. Over residues 972–981 (QAQQQQQQQQ) the composition is skewed to low complexity. Glycyl lysine isopeptide (Lys-Gly) (interchain with G-Cter in SUMO2) cross-links involve residues lysine 990, lysine 1091, lysine 1140, lysine 1162, lysine 1199, and lysine 1207. Residues 1111–1147 (YDTLGEEAREEEEGIREEEEQLKEKKKRKKLEYTICE) adopt a coiled-coil conformation. At serine 1208 the chain carries Phosphoserine. Disordered regions lie at residues 1246-1332 (RKKE…PGGP) and 1380-1429 (RKSR…MEDI). 2 stretches are compositionally biased toward low complexity: residues 1253-1269 (QPSS…QQTS) and 1310-1322 (KSSC…SSTS). Phosphoserine is present on residues serine 1430 and serine 1457. Residues lysine 1461 and lysine 1502 each participate in a glycyl lysine isopeptide (Lys-Gly) (interchain with G-Cter in SUMO2) cross-link. 3 disordered regions span residues 1488–1517 (SRKP…PGKN), 1905–1927 (SPPE…YSSG), and 1967–2029 (QMKR…EDRG). 2 stretches are compositionally biased toward polar residues: residues 1495-1514 (LPST…TNRP) and 1911-1927 (SFAS…YSSG). Over residues 1968–1994 (MKRESQNPDQKDETNSIKREQETKKVL) the composition is skewed to basic and acidic residues. Glycyl lysine isopeptide (Lys-Gly) (interchain with G-Cter in SUMO2) cross-links involve residues lysine 1985 and lysine 1992. Residues 2008-2023 (IKQNSGAATSEETLND) are compositionally biased toward polar residues. Glycyl lysine isopeptide (Lys-Gly) (interchain with G-Cter in SUMO2) cross-links involve residues lysine 2103, lysine 2113, lysine 2135, lysine 2139, lysine 2146, lysine 2159, lysine 2194, lysine 2206, and lysine 2238. Residues 2258-2316 (RRAAKSSRGNGHFQGHLLLPGEQIQPKQEKKGGRSSADFTVLDLEEDDEDDNEKTDDSI) are disordered. Arginine 2265 is modified (omega-N-methylarginine). A Glycyl lysine isopeptide (Lys-Gly) (interchain with G-Cter in SUMO2) cross-link involves residue lysine 2284. Positions 2300–2316 (DLEEDDEDDNEKTDDSI) are enriched in acidic residues. Glycyl lysine isopeptide (Lys-Gly) (interchain with G-Cter in SUMO2) cross-links involve residues lysine 2378, lysine 2413, lysine 2457, and lysine 2532. Residues 2423-2474 (YYRRTHTANERRRRGEMRDLFEKLKITLGLLHSSKVSKSLILTRAFSEIQGL) enclose the bHLH domain. Serine 2541 bears the Phosphoserine mark. Residue lysine 2546 forms a Glycyl lysine isopeptide (Lys-Gly) (interchain with G-Cter in SUMO2) linkage. The disordered stretch occupies residues 2576-2595 (KKDQATENTSPLNTPHTSAN). A compositionally biased stretch (polar residues) spans 2581–2595 (TENTSPLNTPHTSAN). Residues lysine 2629, lysine 2679, lysine 2698, and lysine 2784 each participate in a glycyl lysine isopeptide (Lys-Gly) (interchain with G-Cter in SUMO2) cross-link. The segment at 2668–2709 (GSKYPHEVPDSKPSDHLKDTVRNEDNSLEDKGRISSRGNRDG) is disordered. Basic and acidic residues predominate over residues 2671–2709 (YPHEVPDSKPSDHLKDTVRNEDNSLEDKGRISSRGNRDG). The stretch at 2817–2841 (DDTDETLTSLLNEIAFLNQQLNDDS) forms a coiled coil. Residues serine 2910 and serine 2921 each carry the phosphoserine modification. Residues 2944 to 2968 (AIDGGKNTSGLPAEPESVSSPPTLH) form a disordered region. Position 2978 is a phosphoserine (serine 2978). Lysine 3041 is covalently cross-linked (Glycyl lysine isopeptide (Lys-Gly) (interchain with G-Cter in SUMO2)).

Interacts with MAX. Requires dimerization with MAX for E-box binding. Component of some MLL1/MLL complex, at least composed of the core components KMT2A/MLL1, ASH2L, HCFC1/HCF1, WDR5 and RBBP5, as well as the facultative components BACC1, CHD8, E2F6, HSP70, INO80C, KANSL1, LAS1L, MAX, MCRS1, MGA, MYST1/MOF, PELP1, PHF20, PRP31, RING2, RUVB1/TIP49A, RUVB2/TIP49B, SENP3, TAF1, TAF4, TAF6, TAF7, TAF9 and TEX10. Interacts with ZMYND11. As to expression, highly expressed in germ cells and granulosa cells.

It is found in the nucleus. In terms of biological role, functions as a dual-specificity transcription factor, regulating the expression of both MAX-network and T-box family target genes. Functions as a repressor or an activator. Binds to 5'-AATTTCACACCTAGGTGTGAAATT-3' core sequence and seems to regulate MYC-MAX target genes. Suppresses transcriptional activation by MYC and inhibits MYC-dependent cell transformation. Function activated by heterodimerization with MAX. This heterodimerization serves the dual function of both generating an E-box-binding heterodimer and simultaneously blocking interaction of a corepressor. This chain is MAX gene-associated protein, found in Homo sapiens (Human).